The primary structure comprises 290 residues: Glycine--tRNA ligase alpha subunit (290 aa).

The protein belongs to the class-II aminoacyl-tRNA synthetase family. In terms of assembly, tetramer of two alpha and two beta subunits.

It localises to the cytoplasm. The catalysed reaction is tRNA(Gly) + glycine + ATP = glycyl-tRNA(Gly) + AMP + diphosphate. In Synechococcus sp. (strain CC9902), this protein is Glycine--tRNA ligase alpha subunit.